The chain runs to 1496 residues: Chromosome partition protein MukB (1496 aa).

63 to 70 (GGNGAGKS) contributes to the ATP binding site. Coiled coils occupy residues 328–493 (KLEL…QRLS), 536–632 (KMQA…APAW), 808–832 (RAAR…HAER), 861–1171 (NPEE…SAEE), and 1235–1291 (IDAI…LQNI). Residues 694 to 811 (PDGSDDVRLN…EVPLFGRAAR (118 aa)) form a flexible hinge region. The span at 1082 to 1091 (RARSRRDELQ) shows a compositional bias: basic and acidic residues. The disordered stretch occupies residues 1082 to 1101 (RARSRRDELQQRLSQQRSRK).

The protein belongs to the SMC family. MukB subfamily. As to quaternary structure, homodimerization via its hinge domain. Binds to DNA via its C-terminal region. Interacts, and probably forms a ternary complex, with MukE and MukF via its C-terminal region. The complex formation is stimulated by calcium or magnesium. Interacts with tubulin-related protein FtsZ.

The protein resides in the cytoplasm. It localises to the nucleoid. Functionally, plays a central role in chromosome condensation, segregation and cell cycle progression. Functions as a homodimer, which is essential for chromosome partition. Involved in negative DNA supercoiling in vivo, and by this means organize and compact chromosomes. May achieve or facilitate chromosome segregation by condensation DNA from both sides of a centrally located replisome during cell division. This Actinobacillus pleuropneumoniae serotype 5b (strain L20) protein is Chromosome partition protein MukB.